Here is a 344-residue protein sequence, read N- to C-terminus: S-methyl-5'-thioadenosine phosphorylase (344 aa).

Residues T45, 88–89 (RH), and 121–122 (SA) each bind phosphate. Position 238 (M238) interacts with substrate. S239 lines the phosphate pocket. A substrate-binding site is contributed by 262 to 264 (DYD).

The protein belongs to the PNP/MTAP phosphorylase family. MTAP subfamily. Homotrimer.

The protein localises to the cytoplasm. Its subcellular location is the nucleus. The enzyme catalyses S-methyl-5'-thioadenosine + phosphate = 5-(methylsulfanyl)-alpha-D-ribose 1-phosphate + adenine. It functions in the pathway amino-acid biosynthesis; L-methionine biosynthesis via salvage pathway; S-methyl-5-thio-alpha-D-ribose 1-phosphate from S-methyl-5'-thioadenosine (phosphorylase route): step 1/1. Catalyzes the reversible phosphorylation of S-methyl-5'-thioadenosine (MTA) to adenine and 5-methylthioribose-1-phosphate. Involved in the breakdown of MTA, a major by-product of polyamine biosynthesis. Responsible for the first step in the methionine salvage pathway after MTA has been generated from S-adenosylmethionine. Has broad substrate specificity with 6-aminopurine nucleosides as preferred substrates. The protein is S-methyl-5'-thioadenosine phosphorylase of Candida albicans (strain SC5314 / ATCC MYA-2876) (Yeast).